Consider the following 39-residue polypeptide: Photosystem II reaction center protein J (39 aa).

The chain crosses the membrane as a helical span at residues 7–27; the sequence is IPLWIVAVVVGLGVVTVVGLF.

This sequence belongs to the PsbJ family. As to quaternary structure, PSII is composed of 1 copy each of membrane proteins PsbA, PsbB, PsbC, PsbD, PsbE, PsbF, PsbH, PsbI, PsbJ, PsbK, PsbL, PsbM, PsbT, PsbX, PsbY, PsbZ, Psb30/Ycf12, peripheral proteins PsbO, CyanoQ (PsbQ), PsbU, PsbV and a large number of cofactors. It forms dimeric complexes.

The protein localises to the cellular thylakoid membrane. Functionally, one of the components of the core complex of photosystem II (PSII). PSII is a light-driven water:plastoquinone oxidoreductase that uses light energy to abstract electrons from H(2)O, generating O(2) and a proton gradient subsequently used for ATP formation. It consists of a core antenna complex that captures photons, and an electron transfer chain that converts photonic excitation into a charge separation. The polypeptide is Photosystem II reaction center protein J (Synechococcus sp. (strain JA-3-3Ab) (Cyanobacteria bacterium Yellowstone A-Prime)).